The sequence spans 463 residues: Fumarate hydratase class II (463 aa).

Substrate-binding positions include 97-99 (SGT), 128-131 (HPND), 138-140 (SSN), and T186. H187 acts as the Proton donor/acceptor in catalysis. The active site involves S317. Residues S318 and 323–325 (KVN) contribute to the substrate site.

Belongs to the class-II fumarase/aspartase family. Fumarase subfamily. Homotetramer.

It localises to the cytoplasm. It carries out the reaction (S)-malate = fumarate + H2O. It functions in the pathway carbohydrate metabolism; tricarboxylic acid cycle; (S)-malate from fumarate: step 1/1. Functionally, involved in the TCA cycle. Catalyzes the stereospecific interconversion of fumarate to L-malate. In Campylobacter jejuni subsp. jejuni serotype O:2 (strain ATCC 700819 / NCTC 11168), this protein is Fumarate hydratase class II.